The sequence spans 483 residues: ATP synthase subunit beta (483 aa).

ATP is bound at residue 162-169 (GGAGVGKT).

Belongs to the ATPase alpha/beta chains family. F-type ATPases have 2 components, CF(1) - the catalytic core - and CF(0) - the membrane proton channel. CF(1) has five subunits: alpha(3), beta(3), gamma(1), delta(1), epsilon(1). CF(0) has four main subunits: a(1), b(1), b'(1) and c(9-12).

The protein resides in the cellular thylakoid membrane. It carries out the reaction ATP + H2O + 4 H(+)(in) = ADP + phosphate + 5 H(+)(out). Functionally, produces ATP from ADP in the presence of a proton gradient across the membrane. The catalytic sites are hosted primarily by the beta subunits. This chain is ATP synthase subunit beta, found in Prochloron didemni.